The chain runs to 527 residues: Peptide chain release factor 3 (527 aa).

The tr-type G domain occupies 9-277 (AKRRTFAIIS…CIVDWAPQPL (269 aa)). Residues 18 to 25 (SHPDAGKT), 86 to 90 (DTPGH), and 140 to 143 (NKLD) each bind GTP.

It belongs to the TRAFAC class translation factor GTPase superfamily. Classic translation factor GTPase family. PrfC subfamily.

The protein resides in the cytoplasm. Functionally, increases the formation of ribosomal termination complexes and stimulates activities of RF-1 and RF-2. It binds guanine nucleotides and has strong preference for UGA stop codons. It may interact directly with the ribosome. The stimulation of RF-1 and RF-2 is significantly reduced by GTP and GDP, but not by GMP. This Pseudomonas aeruginosa (strain LESB58) protein is Peptide chain release factor 3.